The sequence spans 46 residues: GTP cyclohydrolase 1 (46 aa).

Cysteine 7 serves as a coordination point for Zn(2+).

This sequence belongs to the GTP cyclohydrolase I family. As to quaternary structure, homomer.

The catalysed reaction is GTP + H2O = 7,8-dihydroneopterin 3'-triphosphate + formate + H(+). It functions in the pathway cofactor biosynthesis; 7,8-dihydroneopterin triphosphate biosynthesis; 7,8-dihydroneopterin triphosphate from GTP: step 1/1. The protein is GTP cyclohydrolase 1 (folE) of Bacillus pumilus (Bacillus mesentericus).